The following is a 189-amino-acid chain: MDAVDATVEKLRAQCLSRGALGIQGLARFFRRLDRDRSRSLDSRELQRGLAELGLVLDTAEAEGVCRRWDRDGSGTLDLEEFLRALRPPMSQAREAVIAAAFAKLDRSGDGVVTVDDLRGVYSGRTHPKVQSGEWTEEEVLRRFLDNFDSSEKDGQVTLAEFQDYYSGVSASMDTDEEFVAMMTSAWQL.

4 consecutive EF-hand domains span residues Leu21–Val56, Leu57–Gln92, Ala93–Pro128, and Thr136–Ser172. Ca(2+) is bound by residues Asp34, Asp36, Ser38, Ser40, Glu45, Asp70, Asp72, Ser74, Thr76, Glu81, Asp106, Ser108, Asp110, and Asp117. At Ser40 the chain carries Phosphoserine; by PKA.

As to quaternary structure, monomer. Does not form oligomers in the presence of calcium. In terms of processing, phosphorylated in response to thyrotropin and cAMP. In terms of tissue distribution, detected in thyroid, salivary gland, lung, brain and cerebellum (at protein level).

It localises to the cytoplasm. Functionally, calcium-binding protein. May play a role in cellular signaling events (Potential). The protein is Calcyphosin (CAPS) of Canis lupus familiaris (Dog).